Consider the following 178-residue polypeptide: uncharacterized protein (178 aa).

5 consecutive transmembrane segments (helical) span residues G13–P33, M48–I68, I80–I100, I115–L135, and W155–S175.

It localises to the cell membrane. This is an uncharacterized protein from Bacillus subtilis (strain 168).